Reading from the N-terminus, the 504-residue chain is Signal recognition particle subunit SRP54 (504 aa).

Residues 1–295 form an NG domain region; sequence MVLADLGRKI…KTQPFISKLL (295 aa). Residues 108–115, 190–194, and 248–251 contribute to the GTP site; these read GLQGSGKT, DTSGR, and TKLD. Positions 296-504 are M-domain; it reads GMGDIEGLID…MKGMMGFNNM (209 aa).

It belongs to the GTP-binding SRP family. SRP54 subfamily. Component of a signal recognition particle (SRP) complex that consists of a 7SL RNA molecule of 300 nucleotides and six protein subunits: SRP72, SRP68, SRP54, SRP19, SRP14 and SRP9. Interacts with RNPS1. Interacts with the SRP receptor subunit SRPRA.

The protein resides in the nucleus speckle. It is found in the cytoplasm. The protein localises to the endoplasmic reticulum. The catalysed reaction is GTP + H2O = GDP + phosphate + H(+). In terms of biological role, component of the signal recognition particle (SRP) complex, a ribonucleoprotein complex that mediates the cotranslational targeting of secretory and membrane proteins to the endoplasmic reticulum (ER). As part of the SRP complex, associates with the SRP receptor (SR) component SRPRA to target secretory proteins to the endoplasmic reticulum membrane. Binds to the signal sequence of presecretory proteins when they emerge from the ribosomes. Displays basal GTPase activity, and stimulates reciprocal GTPase activation of the SR subunit SRPRA. Forms a guanosine 5'-triphosphate (GTP)-dependent complex with the SR subunit SRPRA. SR compaction and GTPase mediated rearrangement of SR drive SRP-mediated cotranslational protein translocation into the ER. Requires the presence of SRP9/SRP14 and/or SRP19 to stably interact with RNA. Plays a role in proliferation and differentiation of granulocytic cells, neutrophils migration capacity and exocrine pancreas development. The protein is Signal recognition particle subunit SRP54 of Homo sapiens (Human).